Consider the following 229-residue polypeptide: Cytochrome c oxidase subunit 2 (229 aa).

At 1-26 the chain is on the mitochondrial intermembrane side; the sequence is MANWTQLGLQDASSPLMEELIYFHDY. Residues 27-48 form a helical membrane-spanning segment; sequence TLIILTLITILVFYGLASLLFS. Residues 49–62 lie on the Mitochondrial matrix side of the membrane; sequence SNTNRFFLEGQGLE. A helical membrane pass occupies residues 63–82; sequence TVWTIIPAVILIFIALPSLQ. The Mitochondrial intermembrane segment spans residues 83 to 229; that stretch reads LLYLMDEVNN…ETWVSNFITE (147 aa). Cu cation-binding residues include His161, Cys196, Glu198, Cys200, His204, and Met207. A Mg(2+)-binding site is contributed by Glu198.

Belongs to the cytochrome c oxidase subunit 2 family. As to quaternary structure, component of the cytochrome c oxidase (complex IV, CIV), a multisubunit enzyme composed of a catalytic core of 3 subunits and several supernumerary subunits. The complex exists as a monomer or a dimer and forms supercomplexes (SCs) in the inner mitochondrial membrane with ubiquinol-cytochrome c oxidoreductase (cytochrome b-c1 complex, complex III, CIII). It depends on Cu cation as a cofactor.

It localises to the mitochondrion inner membrane. It carries out the reaction 4 Fe(II)-[cytochrome c] + O2 + 8 H(+)(in) = 4 Fe(III)-[cytochrome c] + 2 H2O + 4 H(+)(out). Functionally, component of the cytochrome c oxidase, the last enzyme in the mitochondrial electron transport chain which drives oxidative phosphorylation. The respiratory chain contains 3 multisubunit complexes succinate dehydrogenase (complex II, CII), ubiquinol-cytochrome c oxidoreductase (cytochrome b-c1 complex, complex III, CIII) and cytochrome c oxidase (complex IV, CIV), that cooperate to transfer electrons derived from NADH and succinate to molecular oxygen, creating an electrochemical gradient over the inner membrane that drives transmembrane transport and the ATP synthase. Cytochrome c oxidase is the component of the respiratory chain that catalyzes the reduction of oxygen to water. Electrons originating from reduced cytochrome c in the intermembrane space (IMS) are transferred via the dinuclear copper A center (CU(A)) of subunit 2 and heme A of subunit 1 to the active site in subunit 1, a binuclear center (BNC) formed by heme A3 and copper B (CU(B)). The BNC reduces molecular oxygen to 2 water molecules using 4 electrons from cytochrome c in the IMS and 4 protons from the mitochondrial matrix. In Patiria pectinifera (Starfish), this protein is Cytochrome c oxidase subunit 2 (COII).